The chain runs to 279 residues: Dermonecrotic toxin LrSicTox-alphaIA1i (279 aa).

Residue His-11 is part of the active site. Residues Glu-31 and Asp-33 each contribute to the Mg(2+) site. Catalysis depends on His-47, which acts as the Nucleophile. Cystine bridges form between Cys-51/Cys-57 and Cys-53/Cys-196. Asp-91 is a Mg(2+) binding site. N-linked (GlcNAc...) asparagine glycosylation is present at Asn-256.

The protein belongs to the arthropod phospholipase D family. Class II subfamily. The cofactor is Mg(2+). Expressed by the venom gland.

Its subcellular location is the secreted. It catalyses the reaction an N-(acyl)-sphingosylphosphocholine = an N-(acyl)-sphingosyl-1,3-cyclic phosphate + choline. It carries out the reaction an N-(acyl)-sphingosylphosphoethanolamine = an N-(acyl)-sphingosyl-1,3-cyclic phosphate + ethanolamine. The catalysed reaction is a 1-acyl-sn-glycero-3-phosphocholine = a 1-acyl-sn-glycero-2,3-cyclic phosphate + choline. The enzyme catalyses a 1-acyl-sn-glycero-3-phosphoethanolamine = a 1-acyl-sn-glycero-2,3-cyclic phosphate + ethanolamine. Inhibited with low affinity by edelfosine. Its function is as follows. Dermonecrotic toxins cleave the phosphodiester linkage between the phosphate and headgroup of certain phospholipids (sphingolipid and lysolipid substrates), forming an alcohol (often choline) and a cyclic phosphate. This toxin acts on sphingomyelin (SM). It also acts on a broad range of lysophospholipids, like lysophosphatidylinositol (LPI), lysophosphatidylglycerol (LPG), lysophosphatidylethanolamine (LPE), lysobisphosphatidic acid (LBPA), lysophosphatidylserine (LPS) and lysophosphatidylcholines (LPC) of varying chain lengths. The substrate preference is LPI &gt; LPG &gt; LPS &gt; LPC &gt;&gt; LPE, LBPA. Furthermore, the enzyme also act on cyclic phosphatidic acid and lyso-platelet activating factor (LPAF, an alkyl-LPC). The enzyme does not act on sphingosylphosphorylcholine (SPC, also known as lyso-sphingomyelin) and PAF. The toxin may also act on ceramide phosphoethanolamine (CPE). It acts by transphosphatidylation, releasing exclusively cyclic phosphate products as second products. It does not exhibit detectable PLA1/2 activity. It induces dose-dependent hemolysis and dermonecrosis. Also induces increased vascular permeability, edema, inflammatory response, and platelet aggregation. This Loxosceles reclusa (Brown recluse spider) protein is Dermonecrotic toxin LrSicTox-alphaIA1i.